The chain runs to 326 residues: Beta-ketoacyl-[acyl-carrier-protein] synthase III (326 aa).

Residues C111 and H252 contribute to the active site. An ACP-binding region spans residues 253–257 (QANIR). N282 is an active-site residue.

The protein belongs to the thiolase-like superfamily. FabH family. Homodimer.

The protein resides in the plastid. It is found in the chloroplast. It catalyses the reaction malonyl-[ACP] + acetyl-CoA + H(+) = 3-oxobutanoyl-[ACP] + CO2 + CoA. The protein operates within lipid metabolism; fatty acid biosynthesis. Its function is as follows. Catalyzes the condensation reaction of fatty acid synthesis by the addition to an acyl acceptor of two carbons from malonyl-ACP. Catalyzes the first condensation reaction which initiates fatty acid synthesis and may therefore play a role in governing the total rate of fatty acid production. Possesses both acetoacetyl-ACP synthase and acetyl transacylase activities. Its substrate specificity determines the biosynthesis of branched-chain and/or straight-chain of fatty acids. The sequence is that of Beta-ketoacyl-[acyl-carrier-protein] synthase III from Porphyra umbilicalis (Purple laver).